The sequence spans 236 residues: uncharacterized protein (236 aa).

Positions 1 to 26 are cleaved as a signal peptide; that stretch reads MTNTWNRLALLIFAVLSLLVAGELQA.

The protein belongs to the periplasmic pilus chaperone family.

Its subcellular location is the periplasm. In terms of biological role, part of the elfADCG-ycbUVF fimbrial operon, which promotes adhesion of bacteria to different abiotic surfaces. Could be required for the biogenesis of fimbriae. This is an uncharacterized protein from Escherichia coli (strain K12).